Consider the following 103-residue polypeptide: Small ribosomal subunit protein uS10 (103 aa).

It belongs to the universal ribosomal protein uS10 family. In terms of assembly, part of the 30S ribosomal subunit.

Involved in the binding of tRNA to the ribosomes. This is Small ribosomal subunit protein uS10 from Salinibacter ruber (strain DSM 13855 / M31).